An 836-amino-acid polypeptide reads, in one-letter code: Pentatricopeptide repeat-containing protein At2g39620 (836 aa).

PPR repeat units follow at residues Met-1 to Pro-35, His-36 to Pro-62, Gly-63 to Pro-98, Asp-99 to Ser-133, Asp-134 to Lys-164, Asp-165 to Ile-199, Asp-200 to Lys-230, Ile-233 to Lys-263, Asp-264 to Met-298, Asn-299 to Gly-333, Asp-334 to Arg-364, Asp-365 to Pro-399, Asn-400 to Ser-434, Glu-435 to Lys-465, Asp-466 to Pro-500, Asp-501 to Ser-535, Glu-536 to Glu-566, Ser-568 to Pro-602, Asn-603 to Ser-637, Gln-638 to Lys-668, Tyr-669 to Pro-703, Asp-704 to Arg-734, and Glu-740 to Lys-770. A type E motif; degenerate region spans residues Val-775–Val-836.

Belongs to the PPR family. PCMP-E subfamily.

The polypeptide is Pentatricopeptide repeat-containing protein At2g39620 (PCMP-E33) (Arabidopsis thaliana (Mouse-ear cress)).